A 67-amino-acid chain; its full sequence is DNA-directed RNA polymerase subunit omega (67 aa).

The protein belongs to the RNA polymerase subunit omega family. As to quaternary structure, the RNAP catalytic core consists of 2 alpha, 1 beta, 1 beta' and 1 omega subunit. When a sigma factor is associated with the core the holoenzyme is formed, which can initiate transcription.

The enzyme catalyses RNA(n) + a ribonucleoside 5'-triphosphate = RNA(n+1) + diphosphate. In terms of biological role, promotes RNA polymerase assembly. Latches the N- and C-terminal regions of the beta' subunit thereby facilitating its interaction with the beta and alpha subunits. The sequence is that of DNA-directed RNA polymerase subunit omega from Ralstonia pickettii (strain 12J).